The following is a 799-amino-acid chain: Histidine biosynthesis trifunctional protein (799 aa).

The tract at residues 1–229 (MVLPILPLID…FIVEQENVGF (229 aa)) is phosphoribosyl-AMP cyclohydrolase. Residues 230–312 (CHLETMSCFG…FYFALAKLVT (83 aa)) form a phosphoribosyl-ATP pyrophosphohydrolase region. Residues 313-799 (NNVSLKDVEN…KLGLIPKDFQ (487 aa)) form a histidinol dehydrogenase region. Residues Gln618 and His621 each coordinate Zn(2+). Catalysis depends on residues Glu687 and His688. Zn(2+) is bound by residues Asp721 and His780.

It in the C-terminal section; belongs to the histidinol dehydrogenase family. The cofactor is Zn(2+).

It carries out the reaction 1-(5-phospho-beta-D-ribosyl)-5'-AMP + H2O = 1-(5-phospho-beta-D-ribosyl)-5-[(5-phospho-beta-D-ribosylamino)methylideneamino]imidazole-4-carboxamide. The enzyme catalyses 1-(5-phospho-beta-D-ribosyl)-ATP + H2O = 1-(5-phospho-beta-D-ribosyl)-5'-AMP + diphosphate + H(+). The catalysed reaction is L-histidinol + 2 NAD(+) + H2O = L-histidine + 2 NADH + 3 H(+). It functions in the pathway amino-acid biosynthesis; L-histidine biosynthesis; L-histidine from 5-phospho-alpha-D-ribose 1-diphosphate: step 2/9. Its pathway is amino-acid biosynthesis; L-histidine biosynthesis; L-histidine from 5-phospho-alpha-D-ribose 1-diphosphate: step 3/9. The protein operates within amino-acid biosynthesis; L-histidine biosynthesis; L-histidine from 5-phospho-alpha-D-ribose 1-diphosphate: step 9/9. This chain is Histidine biosynthesis trifunctional protein (HIS4), found in Saccharomyces bayanus (Yeast).